The chain runs to 87 residues: U3-theraphotoxin-Hhn1a 16 (87 aa).

The first 24 residues, 1–24 (MVNMKASMFLTFAGLVLLFVVCYA), serve as a signal peptide directing secretion. A propeptide spanning residues 25-52 (SESEEKEFPKEMLSSIFAVDNDFKQGER) is cleaved from the precursor. 3 disulfide bridges follow: cysteine 54–cysteine 67, cysteine 61–cysteine 72, and cysteine 66–cysteine 79.

The protein belongs to the neurotoxin 10 (Hwtx-1) family. 51 (Hntx-8) subfamily. Hntx-8 sub-subfamily. In terms of tissue distribution, expressed by the venom gland.

The protein localises to the secreted. Functionally, ion channel inhibitor. In Cyriopagopus hainanus (Chinese bird spider), this protein is U3-theraphotoxin-Hhn1a 16.